Reading from the N-terminus, the 442-residue chain is Histidinol dehydrogenase (442 aa).

NAD(+) is bound by residues Y142, Q204, and N227. Residues S250, Q272, and H275 each contribute to the substrate site. 2 residues coordinate Zn(2+): Q272 and H275. Active-site proton acceptor residues include E340 and H341. Positions 341, 374, 428, and 433 each coordinate substrate. D374 provides a ligand contact to Zn(2+). H433 contacts Zn(2+).

Belongs to the histidinol dehydrogenase family. Zn(2+) is required as a cofactor.

It catalyses the reaction L-histidinol + 2 NAD(+) + H2O = L-histidine + 2 NADH + 3 H(+). The protein operates within amino-acid biosynthesis; L-histidine biosynthesis; L-histidine from 5-phospho-alpha-D-ribose 1-diphosphate: step 9/9. Functionally, catalyzes the sequential NAD-dependent oxidations of L-histidinol to L-histidinaldehyde and then to L-histidine. The protein is Histidinol dehydrogenase of Prochlorococcus marinus (strain MIT 9313).